The following is a 184-amino-acid chain: Ribosome-recycling factor (184 aa).

This sequence belongs to the RRF family.

The protein localises to the cytoplasm. Its function is as follows. Responsible for the release of ribosomes from messenger RNA at the termination of protein biosynthesis. May increase the efficiency of translation by recycling ribosomes from one round of translation to another. This is Ribosome-recycling factor from Onion yellows phytoplasma (strain OY-M).